We begin with the raw amino-acid sequence, 331 residues long: Histone-lysine N-methyltransferase, H3 lysine-9 specific dim-5 (331 aa).

The 83-residue stretch at 77-159 (VGCSCASDEE…DCPNRVVERG (83 aa)) folds into the Pre-SET domain. Cys-79, Cys-81, Cys-87, Cys-92, Cys-94, Cys-141, Cys-145, Cys-147, and Cys-151 together coordinate Zn(2+). Positions 162–297 (VPLQIFRTKD…KGTELTFDYV (136 aa)) constitute an SET domain. S-adenosyl-L-methionine-binding positions include 172-174 (RGW), Asp-215, Tyr-217, Arg-251, and 254-255 (NH). Zn(2+) contacts are provided by Cys-257, Cys-319, Cys-321, and Cys-326. One can recognise a Post-SET domain in the interval 315-331 (EMTKCLCGTAKCRGYLW).

This sequence belongs to the class V-like SAM-binding methyltransferase superfamily. Histone-lysine methyltransferase family. Suvar3-9 subfamily.

The protein resides in the nucleus. The protein localises to the chromosome. The enzyme catalyses L-lysyl(9)-[histone H3] + 3 S-adenosyl-L-methionine = N(6),N(6),N(6)-trimethyl-L-lysyl(9)-[histone H3] + 3 S-adenosyl-L-homocysteine + 3 H(+). In terms of biological role, histone methyltransferase that specifically trimethylates histone H3 to form H3K9me3. H3K9me3 marks chromatin regions for DNA methylation. Dim-5 recognizes Arg-8 to Gly-12 of the H3 tail with Thr-11 and Gly-12 being the most important specificity determinants, the recognition of whcih is important to distinguish H3K9 from H3K27 and H4K20. This Neurospora crassa (strain ATCC 24698 / 74-OR23-1A / CBS 708.71 / DSM 1257 / FGSC 987) protein is Histone-lysine N-methyltransferase, H3 lysine-9 specific dim-5 (dim-5).